The primary structure comprises 715 residues: 1,4-alpha-glucan branching enzyme GlgB (715 aa).

The Nucleophile role is filled by Asp-396. Glu-449 functions as the Proton donor in the catalytic mechanism.

This sequence belongs to the glycosyl hydrolase 13 family. GlgB subfamily. In terms of assembly, monomer.

The enzyme catalyses Transfers a segment of a (1-&gt;4)-alpha-D-glucan chain to a primary hydroxy group in a similar glucan chain.. It functions in the pathway glycan biosynthesis; glycogen biosynthesis. Its function is as follows. Catalyzes the formation of the alpha-1,6-glucosidic linkages in glycogen by scission of a 1,4-alpha-linked oligosaccharide from growing alpha-1,4-glucan chains and the subsequent attachment of the oligosaccharide to the alpha-1,6 position. This chain is 1,4-alpha-glucan branching enzyme GlgB, found in Vibrio vulnificus (strain CMCP6).